Here is a 94-residue protein sequence, read N- to C-terminus: Probable Fe(2+)-trafficking protein (94 aa).

Belongs to the Fe(2+)-trafficking protein family.

Its function is as follows. Could be a mediator in iron transactions between iron acquisition and iron-requiring processes, such as synthesis and/or repair of Fe-S clusters in biosynthetic enzymes. This is Probable Fe(2+)-trafficking protein from Haemophilus ducreyi (strain 35000HP / ATCC 700724).